The sequence spans 207 residues: MTKLSKRQQMIFDFIKSEVKLKGYPPSVREIAVAVGLASSSTVHGHLERLENKGYIRRDPTKPRAIEIIDLEMEQQLPKDEARYAPVIGKVTAGIPITAVENIEEFVPIPSSSAGPDDNVFVLVIDGESMIEAGILDGDMVIVKQQNTAVNGEIVVAMTEENEATVKRFFKEENRIRLQPENATMEPLFYDNVTILGKVIGLYRNIH.

Residues 28–48 (VREIAVAVGLASSSTVHGHLE) constitute a DNA-binding region (H-T-H motif). Catalysis depends on for autocatalytic cleavage activity residues Ser-129 and Lys-167.

This sequence belongs to the peptidase S24 family. Homodimer.

The enzyme catalyses Hydrolysis of Ala-|-Gly bond in repressor LexA.. Represses a number of genes involved in the response to DNA damage (SOS response), including recA and lexA. In the presence of single-stranded DNA, RecA interacts with LexA causing an autocatalytic cleavage which disrupts the DNA-binding part of LexA, leading to derepression of the SOS regulon and eventually DNA repair. The chain is LexA repressor from Oceanobacillus iheyensis (strain DSM 14371 / CIP 107618 / JCM 11309 / KCTC 3954 / HTE831).